Here is a 704-residue protein sequence, read N- to C-terminus: Translin-associated factor X-interacting protein 1 (704 aa).

Positions 1–37 (MANLQERKSFSKPRISIQASGGTPEAKGIEKRKLSQK) are disordered. Coiled-coil stretches lie at residues 190–230 (EISV…AEEY) and 304–342 (RRDL…LQLH).

In terms of assembly, interacts with TSNAX. As to expression, specifically expressed in testes. Predominantly detected in the post-meiotic stages of germ cells.

Its subcellular location is the cytoplasm. It localises to the perinuclear region. Functionally, possible role in spermatogenesis. The chain is Translin-associated factor X-interacting protein 1 from Mus musculus (Mouse).